The sequence spans 264 residues: [LysW]-aminoadipate/[LysW]-glutamate kinase (264 aa).

Residues 35–36 (GG), R62, and N167 contribute to the substrate site.

It belongs to the acetylglutamate kinase family. LysZ subfamily.

It localises to the cytoplasm. It catalyses the reaction [amino-group carrier protein]-C-terminal-N-(1,4-dicarboxybutan-1-yl)-L-glutamine + ATP = [amino-group carrier protein]-C-terminal-N-(1-carboxy-5-phosphooxy-5-oxopentan-1-yl)-L-glutamine + ADP. The catalysed reaction is [amino-group carrier protein]-C-terminal-gamma-(L-glutamyl)-L-glutamate + ATP = [amino-group carrier protein]-C-terminal-gamma-(5-phospho-L-glutamyl)-L-glutamate + ADP. The protein operates within amino-acid biosynthesis; L-lysine biosynthesis via AAA pathway; L-lysine from L-alpha-aminoadipate (Thermus route): step 2/5. It functions in the pathway amino-acid biosynthesis; L-arginine biosynthesis. Involved in both the arginine and lysine biosynthetic pathways. Phosphorylates the LysW-bound precursors glutamate (for arginine biosynthesis), respectively alpha-aminoadipate (for lysine biosynthesis). This Saccharolobus islandicus (strain Y.N.15.51 / Yellowstone #2) (Sulfolobus islandicus) protein is [LysW]-aminoadipate/[LysW]-glutamate kinase.